An 87-amino-acid polypeptide reads, in one-letter code: Virulence protein PagD (87 aa).

A signal peptide spans 1–20 (MKHHAFMLWSLLIFSFHVLA). Residues 46–87 (QPPTNTDKKQARQISSPSCPTTKPMMSAPVNDARKGNTFSRT) form a disordered region. Polar residues predominate over residues 57–66 (RQISSPSCPT).

Functionally, putative function in virulence. Could be involved in promoting S.typhimurium survival within macrophages. This Salmonella typhimurium (strain LT2 / SGSC1412 / ATCC 700720) protein is Virulence protein PagD (pagD).